We begin with the raw amino-acid sequence, 413 residues long: uncharacterized protein (413 aa).

It belongs to the mimivirus L17x/L18x family.

This is an uncharacterized protein from Acanthamoeba polyphaga (Amoeba).